A 409-amino-acid chain; its full sequence is uncharacterized protein (409 aa).

The segment covering 36 to 50 (HLKAKARAQESDSDR) has biased composition (basic and acidic residues). Disordered stretches follow at residues 36–67 (HLKA…TFSS), 239–298 (IENT…SSTI), and 338–373 (RSQI…TGPR). The segment covering 51-67 (PCSSIESSSEPASTFSS) has biased composition (low complexity). Residues 245–265 (VREESNQEHPPGKQEKTEKHP) show a composition bias toward basic and acidic residues. A compositionally biased stretch (polar residues) spans 268 to 281 (LQGSHQAEPETSSK). Composition is skewed to basic and acidic residues over residues 282-294 (NSEE…KMDD) and 338-350 (RSQI…EGRR).

This is an uncharacterized protein from Homo sapiens (Human).